A 182-amino-acid chain; its full sequence is Adenylate kinase isoenzyme 6 homolog (182 aa).

The interval 1-20 (MATPETRRRPNILVTGSPGT) is disordered. Glycine 19, glycine 21, lysine 22, serine 23, and threonine 24 together coordinate ATP. The interval 39 to 62 (EVSKEVRENNLQGDFDEQYNCHVL) is NMPbind. Residues 116-126 (SRGYSEFKIKE) are LID. Position 117 (arginine 117) interacts with ATP.

Belongs to the adenylate kinase family. AK6 subfamily. As to quaternary structure, monomer and homodimer. Interacts with small ribosomal subunit protein uS11. Not a structural component of 43S pre-ribosomes, but transiently interacts with them by binding to uS11.

Its subcellular location is the cytoplasm. It is found in the nucleus. The catalysed reaction is AMP + ATP = 2 ADP. It carries out the reaction ATP + H2O = ADP + phosphate + H(+). In terms of biological role, broad-specificity nucleoside monophosphate (NMP) kinase that catalyzes the reversible transfer of the terminal phosphate group between nucleoside triphosphates and monophosphates. Also has ATPase activity. Involved in the late cytoplasmic maturation steps of the 40S ribosomal particles, specifically 18S rRNA maturation. While NMP activity is not required for ribosome maturation, ATPase activity is. Associates transiently with small ribosomal subunit protein uS11. ATP hydrolysis breaks the interaction with uS11. May temporarily remove uS11 from the ribosome to enable a conformational change of the ribosomal RNA that is needed for the final maturation step of the small ribosomal subunit. Its NMP activity may have a role in nuclear energy homeostasis. AMP and dAMP are the preferred substrates, but CMP and TMP are also good substrates. ATP and dATP are the best phosphate donors. The polypeptide is Adenylate kinase isoenzyme 6 homolog (Caenorhabditis elegans).